The sequence spans 106 residues: Large ribosomal subunit protein uL24 (106 aa).

Belongs to the universal ribosomal protein uL24 family. Part of the 50S ribosomal subunit.

Functionally, one of two assembly initiator proteins, it binds directly to the 5'-end of the 23S rRNA, where it nucleates assembly of the 50S subunit. One of the proteins that surrounds the polypeptide exit tunnel on the outside of the subunit. This is Large ribosomal subunit protein uL24 from Verminephrobacter eiseniae (strain EF01-2).